Reading from the N-terminus, the 428-residue chain is 2,3-bisphosphoglycerate-independent phosphoglycerate mutase 2 (428 aa).

It belongs to the BPG-independent phosphoglycerate mutase family. A-PGAM subfamily.

The catalysed reaction is (2R)-2-phosphoglycerate = (2R)-3-phosphoglycerate. It participates in carbohydrate degradation; glycolysis; pyruvate from D-glyceraldehyde 3-phosphate: step 3/5. Catalyzes the interconversion of 2-phosphoglycerate and 3-phosphoglycerate. This chain is 2,3-bisphosphoglycerate-independent phosphoglycerate mutase 2 (apgM2), found in Methanocaldococcus jannaschii (strain ATCC 43067 / DSM 2661 / JAL-1 / JCM 10045 / NBRC 100440) (Methanococcus jannaschii).